A 384-amino-acid polypeptide reads, in one-letter code: Outer membrane protein assembly factor BamB (384 aa).

The N-terminal stretch at 1–21 (MKLTLKRKFIAVLALTSLLGA) is a signal peptide. A lipid anchor (N-palmitoyl cysteine) is attached at Cys-22. The S-diacylglycerol cysteine moiety is linked to residue Cys-22.

The protein belongs to the BamB family. In terms of assembly, part of the Bam complex.

The protein localises to the cell outer membrane. In terms of biological role, part of the outer membrane protein assembly complex, which is involved in assembly and insertion of beta-barrel proteins into the outer membrane. This chain is Outer membrane protein assembly factor BamB, found in Taylorella asinigenitalis (strain MCE3).